The following is a 146-amino-acid chain: Neutral phospholipase A2 B (146 aa).

Residues 1 to 21 form the signal peptide; it reads MNPAHLLILAAVCVSPLGASS. A propeptide spanning residues 22 to 27 is cleaved from the precursor; it reads NRPMPL. 7 disulfide bridges follow: Cys38–Cys98, Cys53–Cys145, Cys55–Cys71, Cys70–Cys126, Cys77–Cys119, Cys87–Cys112, and Cys105–Cys117. Tyr54, Gly56, and Gly58 together coordinate Ca(2+). His74 is a catalytic residue. Asp75 serves as a coordination point for Ca(2+). Residue Asp120 is part of the active site.

The protein belongs to the phospholipase A2 family. Group I subfamily. D49 sub-subfamily. Ca(2+) is required as a cofactor. In terms of tissue distribution, expressed by the venom gland.

It is found in the secreted. The enzyme catalyses a 1,2-diacyl-sn-glycero-3-phosphocholine + H2O = a 1-acyl-sn-glycero-3-phosphocholine + a fatty acid + H(+). PLA2 catalyzes the calcium-dependent hydrolysis of the 2-acyl groups in 3-sn-phosphoglycerides. The chain is Neutral phospholipase A2 B from Naja sputatrix (Malayan spitting cobra).